The primary structure comprises 695 residues: Elongation factor G (695 aa).

Residues 8–282 form the tr-type G domain; it reads EKTRNIGIMA…AVLDYLPAPT (275 aa). Residues 17–24, 81–85, and 135–138 each bind GTP; these read AHIDAGKT, DTPGH, and NKMD.

Belongs to the TRAFAC class translation factor GTPase superfamily. Classic translation factor GTPase family. EF-G/EF-2 subfamily.

The protein resides in the cytoplasm. Its function is as follows. Catalyzes the GTP-dependent ribosomal translocation step during translation elongation. During this step, the ribosome changes from the pre-translocational (PRE) to the post-translocational (POST) state as the newly formed A-site-bound peptidyl-tRNA and P-site-bound deacylated tRNA move to the P and E sites, respectively. Catalyzes the coordinated movement of the two tRNA molecules, the mRNA and conformational changes in the ribosome. The polypeptide is Elongation factor G (Listeria welshimeri serovar 6b (strain ATCC 35897 / DSM 20650 / CCUG 15529 / CIP 8149 / NCTC 11857 / SLCC 5334 / V8)).